Here is a 548-residue protein sequence, read N- to C-terminus: Putative ATP-dependent RNA helicase R290 (548 aa).

Residues 38 to 206 enclose the Helicase ATP-binding domain; sequence INKVINGEDV…CKVLQLKTNE (169 aa). 51 to 58 is a binding site for ATP; sequence LMTSAGKS. The short motif at 150 to 153 is the DEAH box element; it reads DEAH. Positions 231–376 constitute a Helicase C-terminal domain; sequence DIVPIINKYP…KTQLALLEQM (146 aa).

It belongs to the DEAD box helicase family. DEAH subfamily.

It catalyses the reaction ATP + H2O = ADP + phosphate + H(+). The sequence is that of Putative ATP-dependent RNA helicase R290 from Acanthamoeba polyphaga mimivirus (APMV).